The sequence spans 416 residues: MVRPRRAPHRSGAGGPLGGRGRPPRPLVVRAVRSRSWPAGPRGPQPPRIRARSAPPMEGARVFGALGPIGPSSPGLTLGGLAVNEHRLSNKLLAWSGVLEWQEKRRPFSDSAAKLKRTLPCQAYVNQGENLETDQWPQKLIMQLIPQQLLTTLGPLFRNSQLAQFHFTNRDCDSLKGLCRIMGNGFAGCMLFPHISPCEVRVLMLLYSSKKKIFMGLIPYDQSGFVNAIRQVITTRKQAVGPGGVHSGPVQIVNNKFLAWSGVMEWQEPRPEPNSRSKRWLPSHVYVNQGEILRTDQWPRRLFMQLIPQQLLTTLVPLFRNSRLVQFHFTKDMETLKSLCRIMDNGFAGCVHFSYKASCEVRVLMLLYSSEKKIFIGLIPHDQSNFVNGIRRVIANQQQVLQRSLEQEQQQRGMGG.

A disordered region spans residues 1–53 (MVRPRRAPHRSGAGGPLGGRGRPPRPLVVRAVRSRSWPAGPRGPQPPRIRARS). Positions 12 to 21 (GAGGPLGGRG) are enriched in gly residues. Over residues 27–36 (LVVRAVRSRS) the composition is skewed to low complexity. At serine 53 the chain carries Phosphoserine. The tract at residues 184 to 416 (NGFAGCMLFP…QEQQQRGMGG (233 aa)) is interaction with FLOT1.

Belongs to the Mediator complex subunit 25 family. PTOV1 subfamily. May interact with CREBBP. Interacts with FLOT1. Post-translationally, ubiquitinated by the CRL2(KLHDC2) complex, which recognizes the diglycine (Gly-Gly) at the C-terminus, leading to its degradation. Ubiquitinated by the CRL2(APPBP2) complex, which recognizes the Arg-Xaa-Xaa-Gly sequence at the C-terminus, leading to its degradation.

It is found in the cytoplasm. Its subcellular location is the nucleus. The protein resides in the cell membrane. The protein localises to the perinuclear region. In terms of biological role, may activate transcription. Required for nuclear translocation of FLOT1. Promotes cell proliferation. The protein is Prostate tumor-overexpressed gene 1 protein homolog (Ptov1) of Rattus norvegicus (Rat).